A 1204-amino-acid polypeptide reads, in one-letter code: Probable cation-transporting ATPase 13A4 (1204 aa).

The Cytoplasmic portion of the chain corresponds to 1 to 32 (MGENPAKSHYAQLNLGEENEMEIFGYKTQCCR). The helical transmembrane segment at 33–53 (KALCIAGYILSCGALLLLFYW) threads the bilayer. Topologically, residues 54 to 219 (KPEWDVWANC…FSVCLWFAED (166 aa)) are extracellular. The chain crosses the membrane as a helical span at residues 220 to 242 (YMEYAAAIIIMSPLSISLTVYDL). At 243 to 397 (RQQSVKLQRL…NFRLYRDALR (155 aa)) the chain is on the cytoplasmic side. The helical transmembrane segment at 398-418 (FLMCLIAFAAIGMIYTVCVFA) threads the bilayer. Residues 419–433 (LNGEEAGEVVKKALD) lie on the Extracellular side of the membrane. The helical transmembrane segment at 434–454 (VITIAVPPALPAALTTGIIYT) threads the bilayer. At 455–897 (QRRLKKKGIF…REGRAALVTS (443 aa)) the chain is on the cytoplasmic side. The active-site 4-aspartylphosphate intermediate is the D483. Residues D845 and D849 each contribute to the Mg(2+) site. A helical membrane pass occupies residues 898–918 (FCMFKYMALYSTIQYLGVLLL). The Extracellular portion of the chain corresponds to 919–929 (YWQLNSFGNYQ). Residues 930-950 (FLFQDLAITTVIGMTMSFTEA) traverse the membrane as a helical segment. Residues 951–967 (YPKLVPYRPPSQLVSPP) lie on the Cytoplasmic side of the membrane. The chain crosses the membrane as a helical span at residues 968–988 (LLLSVILNILFSLGMQILGFL). Over 989–1043 (MVQKQPWYSKTDIHSACLSVNNHVENSSSASSLGLHGVGGGDPTEVDNGYKSYEN) the chain is Extracellular. The helical transmembrane segment at 1044 to 1064 (TTVWLLSTINCLIIALVFSKG) threads the bilayer. The Cytoplasmic segment spans residues 1065–1075 (KPFRQPIYTNY). Residues 1076–1096 (VFIMVLVGQLGVCLFLVFADI) form a helical membrane-spanning segment. The Extracellular portion of the chain corresponds to 1097 to 1113 (DDLYSKMDLVCTPTTWR). Residues 1114–1134 (ISMVMMLAVTLAVSFLVEEAI) form a helical membrane-spanning segment. The Cytoplasmic portion of the chain corresponds to 1135 to 1204 (IENRALWLWL…PTFDSNEDAL (70 aa)).

This sequence belongs to the cation transport ATPase (P-type) (TC 3.A.3) family. Type V subfamily.

It is found in the membrane. The enzyme catalyses ATP + H2O = ADP + phosphate + H(+). This is Probable cation-transporting ATPase 13A4 (ATP13A4) from Gallus gallus (Chicken).